A 405-amino-acid chain; its full sequence is MTVDRQALGFGYGEHAAYASNPWASRGRLYPEASSPTRSDFQRDRDRIVHTTAFRRLKHKTQVFIAADGDHYRTRLTHTIEVAQIARALARALKLDEDLAEGVALVHDFGHTPFGHTGEDALHEVLEPYGGFDHNAQSLRIVTKLERRYAEFDGLNLTWESLEGLVKHNGPLMTADGQGLRGPVPQPILDYCALHDLELASFASLEAQVAAIADDIAYNTHDIDDGLRAGYLTFEMLEEIPFLARLMREVHDRYPGLESSRFTHEIMRRQITAMVEDVIAVAQKRLGEVRPESAKDVRCAGRVMATFSDEMSETDRQIKNLLMTRIYRHPEVMRVRQGAASIVTDLYRAFMDDPSLMKEHYWIDQIAGMAEPARARHVGDYLAGMTDTFAISVHRRLFDHTPDLR.

Residues 75-219 (RLTHTIEVAQ…AAIADDIAYN (145 aa)) enclose the HD domain.

Belongs to the dGTPase family. Type 2 subfamily.

This Rhizobium meliloti (strain 1021) (Ensifer meliloti) protein is Deoxyguanosinetriphosphate triphosphohydrolase-like protein.